The chain runs to 184 residues: Mitochondrial import inner membrane translocase subunit TIM22 (184 aa).

Residues 1 to 26 (MSLWGVYTGPQPPKKPLQEMTQEEQA) are disordered. Disulfide bonds link Cys40-Cys118 and Cys137-Cys156. The next 2 membrane-spanning stretches (helical) occupy residues 45 to 65 (VMAG…MASM) and 151 to 171 (AALV…MYLN).

Belongs to the Tim17/Tim22/Tim23 family. As to quaternary structure, component of the TIM22 complex, whose core is composed of TIM22 and TIM54, associated with the 70 kDa heterohexamer composed of TIM9 and TIM10 (or TIM8 and TIM13).

Its subcellular location is the mitochondrion inner membrane. Functionally, essential core component of the TIM22 complex, a complex that mediates the import and insertion of multi-pass transmembrane proteins into the mitochondrial inner membrane. In the TIM22 complex, it constitutes the voltage-activated and signal-gated channel. Forms a twin-pore translocase that uses the membrane potential as external driving force in 2 voltage-dependent steps. The polypeptide is Mitochondrial import inner membrane translocase subunit TIM22 (Candida albicans (strain SC5314 / ATCC MYA-2876) (Yeast)).